A 441-amino-acid chain; its full sequence is Probable pyridine nucleotide-disulfide oxidoreductase RclA (441 aa).

33-43 (EQSNAMYGGTC) contacts FAD. The cysteines at positions 43 and 48 are disulfide-linked. H426 functions as the Proton acceptor in the catalytic mechanism.

The protein belongs to the class-I pyridine nucleotide-disulfide oxidoreductase family. FAD is required as a cofactor.

Its function is as follows. Probably involved in reactive chlorine species (RCS) stress resistance. This chain is Probable pyridine nucleotide-disulfide oxidoreductase RclA (rclA), found in Escherichia coli (strain K12).